Consider the following 127-residue polypeptide: Venom protein family 16 protein 1 (127 aa).

An N-terminal signal peptide occupies residues 1–18 (MWIWYSLLFFGVCHLAHS).

As to expression, expressed by the venom gland (anterior main gland) (at protein level).

It localises to the secreted. This chain is Venom protein family 16 protein 1, found in Platymeris rhadamanthus (Red spot assassin bug).